A 487-amino-acid polypeptide reads, in one-letter code: NADH-quinone oxidoreductase subunit N (487 aa).

14 helical membrane-spanning segments follow: residues 8 to 28 (LIAM…MLSI), 35 to 55 (FINA…LYFV), 78 to 98 (GLVI…LVGY), 104 to 124 (EFYL…SANH), 125 to 145 (LASL…LIGY), 159 to 179 (YMLL…LLYA), 203 to 223 (ILAG…LVPF), 235 to 255 (PAPV…AVVM), 271 to 291 (LVLS…AISQ), 297 to 317 (LLGY…VAVQ), 328 to 348 (IGVY…VVSL), 376 to 396 (AVMT…GFIG), 409 to 428 (LWWL…YYYL), and 451 to 471 (ALTA…VLGI).

Belongs to the complex I subunit 2 family. In terms of assembly, NDH-1 is composed of 13 different subunits. Subunits NuoA, H, J, K, L, M, N constitute the membrane sector of the complex.

Its subcellular location is the cell inner membrane. It carries out the reaction a quinone + NADH + 5 H(+)(in) = a quinol + NAD(+) + 4 H(+)(out). Functionally, NDH-1 shuttles electrons from NADH, via FMN and iron-sulfur (Fe-S) centers, to quinones in the respiratory chain. The immediate electron acceptor for the enzyme in this species is believed to be ubiquinone. Couples the redox reaction to proton translocation (for every two electrons transferred, four hydrogen ions are translocated across the cytoplasmic membrane), and thus conserves the redox energy in a proton gradient. This is NADH-quinone oxidoreductase subunit N from Yersinia pestis bv. Antiqua (strain Angola).